The primary structure comprises 891 residues: Protein translocase subunit SecA 1 (891 aa).

Residues Gln86, 104–108 (GEGKT), and Asp493 each bind ATP. Positions 845–873 (KQVAKPIEASHGDGNRKKAPVVKEKEAGR) are enriched in basic and acidic residues. Residues 845–891 (KQVAKPIEASHGDGNRKKAPVVKEKEAGRNDPCPCGSGKKYKKCCGE) are disordered. The Zn(2+) site is built by Cys877, Cys879, Cys888, and Cys889.

The protein belongs to the SecA family. Monomer and homodimer. Part of the essential Sec protein translocation apparatus which comprises SecA, SecYEG and auxiliary proteins SecDF. Other proteins may also be involved. It depends on Zn(2+) as a cofactor.

The protein resides in the cell membrane. Its subcellular location is the cytoplasm. It carries out the reaction ATP + H2O + cellular proteinSide 1 = ADP + phosphate + cellular proteinSide 2.. Part of the Sec protein translocase complex. Interacts with the SecYEG preprotein conducting channel. Has a central role in coupling the hydrolysis of ATP to the transfer of proteins into and across the cell membrane, serving as an ATP-driven molecular motor driving the stepwise translocation of polypeptide chains across the membrane. In Alkaliphilus metalliredigens (strain QYMF), this protein is Protein translocase subunit SecA 1.